Consider the following 508-residue polypeptide: Strychnine-11-hydroxylase (508 aa).

A helical membrane pass occupies residues 5–25 (MSFLLLFSLCFLIHCFVFLLI). Residue Cys-445 participates in heme binding.

It belongs to the cytochrome P450 family. It depends on heme as a cofactor.

Its subcellular location is the membrane. The catalysed reaction is beta-colubrine + reduced [NADPH--hemoprotein reductase] + O2 = 11-demethylbrucine + oxidized [NADPH--hemoprotein reductase] + H2O + H(+). It functions in the pathway alkaloid biosynthesis. Functionally, monooxygenase involved in the biosynthesis of curare monoterpene indole alkaloids (MIAs), natural products such as strychnine, a neurotoxic compound used as a pesticide to control rodents, and its pharmacologically active derivatives, including brucine, used to regulate blood pressure. Curare alkaloids act as animal glycine receptor antagonists. Catalyzes the conversion of beta-colubrine to 11-deMe brucine. The chain is Strychnine-11-hydroxylase from Strychnos nux-vomica (Poison nut).